Reading from the N-terminus, the 143-residue chain is MASKSNCVLLLAAVLVSIFAAVAAIGNEDCTPWMSTLITPLPSCRDYVEQQACRIETPGSPYLAKQQCCGELANIPQQCRCQALRYFMGPKSRPDQSGLMELPGCPREVQMDFVRILVTPGYCNLTTVHNTPYCLAMEESQWS.

The first 24 residues, Met1 to Ala24, serve as a signal peptide directing secretion.

This sequence belongs to the protease inhibitor I6 (cereal trypsin/alpha-amylase inhibitor) family. In terms of assembly, subunit of the tetrameric inhibitor. Five disulfide bonds, which are essential for the inhibitor activity, are probably present. As to expression, developing endosperm.

Its subcellular location is the secreted. Alpha-amylase/trypsin inhibitor. It could be involved in insect defense mechanisms. The protein is Alpha-amylase/trypsin inhibitor CM16 of Triticum aestivum (Wheat).